The following is a 523-amino-acid chain: Sodium-dependent lysophosphatidylcholine symporter 1-B (523 aa).

Residues 1 to 34 (MAKGEGAEQYTNTSLLQKPSPDEVKLAKHETKSR) lie on the Cytoplasmic side of the membrane. The chain crosses the membrane as a helical span at residues 35 to 64 (LSVCSKLCYAIGGAPYQITGCAIGFFLQIY). Residues 65 to 75 (LLDVALLDPFY) lie on the Extracellular side of the membrane. The helical transmembrane segment at 76 to 96 (ASIILFVGRAWDAVTDPTVGF) threads the bilayer. The Cytoplasmic portion of the chain corresponds to 97–108 (LVSRTPWTRFGR). A helical transmembrane segment spans residues 109–128 (MMPWIVLSTPFAVLCYFLIW). At 129–138 (YVPSVDQGKV) the chain is on the extracellular side. Residues 139–163 (VWYLIFYCCFQTLQTCFHVPYSALT) traverse the membrane as a helical segment. At 164-170 (MFISTEQ) the chain is on the cytoplasmic side. Residues 171 to 202 (KERDSATAYRMTVEVLGTLIGTAIQGQIVGMA) form a helical membrane-spanning segment. Residues 203–226 (NAPCISTEIDLNSTGLEVAPDVNI) lie on the Extracellular side of the membrane. An intrachain disulfide couples Cys206 to Cys457. Residues Asn214 and Asn225 are each glycosylated (N-linked (GlcNAc...) asparagine). Residues 227–260 (TDPHVSLQDLRNAYMIASGVICAIYVVCAVVLFL) form a helical membrane-spanning segment. Over 261–290 (GVKEQKDTCRVRTEPMSFFQGICMVMGHGP) the chain is Cytoplasmic. The helical transmembrane segment at 291-317 (YAKLVMGFLFTSLAFMLLEGNFALFCI) threads the bilayer. Topologically, residues 318–328 (YNLGFRNDFQN) are extracellular. Residues 329–347 (VLLVIMLSATLAIPFWQWF) form a helical membrane-spanning segment. Topologically, residues 348-351 (LTKF) are cytoplasmic. The helical transmembrane segment at 352 to 373 (GKKTAVYIGTTSVVPFLISVVL) threads the bilayer. Over 374-376 (VPS) the chain is Extracellular. Residues 377–413 (SLAVTYIASFAAGVSVAAAFLLPWSMLPDVVDDFKVQ) form a helical membrane-spanning segment. At 414 to 423 (NPESQGHEAI) the chain is on the cytoplasmic side. Residues 424–450 (FYSFYVFFTKFASGVSLGVSTLSLDFA) form a helical membrane-spanning segment. The Extracellular segment spans residues 451–462 (GYVTRGCTQPGE). Residues 463–486 (VKLTLKILVSAAPIVLIIIGLLIF) traverse the membrane as a helical segment. The Cytoplasmic segment spans residues 487-523 (ISYPINEEKRQGNRKLLNEQRENEMDSETDSTELNVV). A disordered region spans residues 504 to 523 (NEQRENEMDSETDSTELNVV).

The protein belongs to the major facilitator superfamily. As to expression, expressed in the developing nervous system.

The protein localises to the cell membrane. It localises to the endoplasmic reticulum membrane. It carries out the reaction a 1-acyl-sn-glycero-3-phosphocholine(in) + Na(+)(in) = a 1-acyl-sn-glycero-3-phosphocholine(out) + Na(+)(out). The enzyme catalyses 1-(4Z,7Z,10Z,13Z,16Z,19Z-docosahexaenoyl)-sn-glycero-3-phosphocholine(in) + Na(+)(in) = 1-(4Z,7Z,10Z,13Z,16Z,19Z-docosahexaenoyl)-sn-glycero-3-phosphocholine(out) + Na(+)(out). The catalysed reaction is 1-(9Z-octadecenoyl)-sn-glycero-3-phosphocholine(in) + Na(+)(in) = 1-(9Z-octadecenoyl)-sn-glycero-3-phosphocholine(out) + Na(+)(out). It catalyses the reaction 1-hexadecanoyl-sn-glycero-3-phosphocholine(in) + Na(+)(in) = 1-hexadecanoyl-sn-glycero-3-phosphocholine(out) + Na(+)(out). It carries out the reaction a 1-acyl-sn-glycero-3-phosphoethanolamine(in) + Na(+)(in) = a 1-acyl-sn-glycero-3-phosphoethanolamine(out) + Na(+)(out). Functionally, sodium-dependent lysophosphatidylcholine (LPC) symporter, which plays an essential role for blood-brain barrier formation and function. Specifically expressed in endothelium of the blood-brain barrier of micro-vessels and transports LPC into the brain. Transport of LPC is essential because it constitutes the major mechanism by which docosahexaenoic acid (DHA), an omega-3 fatty acid that is essential for normal brain growth and cognitive function, enters the brain. Transports LPC carrying long-chain fatty acids such LPC oleate and LPC palmitate with a minimum acyl chain length of 14 carbons. Does not transport docosahexaenoic acid in unesterified fatty acid. This Danio rerio (Zebrafish) protein is Sodium-dependent lysophosphatidylcholine symporter 1-B (mfsd2ab).